Consider the following 143-residue polypeptide: Large ribosomal subunit protein uL11 (143 aa).

It belongs to the universal ribosomal protein uL11 family. In terms of assembly, part of the ribosomal stalk of the 50S ribosomal subunit. Interacts with L10 and the large rRNA to form the base of the stalk. L10 forms an elongated spine to which L12 dimers bind in a sequential fashion forming a multimeric L10(L12)X complex. One or more lysine residues are methylated.

Its function is as follows. Forms part of the ribosomal stalk which helps the ribosome interact with GTP-bound translation factors. The chain is Large ribosomal subunit protein uL11 from Verminephrobacter eiseniae (strain EF01-2).